A 385-amino-acid polypeptide reads, in one-letter code: MSDTTYFTDAWQPKEVLDPETETNANESIIQMVFYHKLACIYHIIMSNYTWKQADIQTLISFYETLGEEINPKVQKVQQNSEANSFSEKAKKFGLLDLPIYSKCVDSSQLIAESASRVYHDAKEYMNNGSATEAELYRFVSSILKEVLEPIFNPKEIRNVLKGLITSLVDSRSRDEEIGSDIEKNVKYEVVRFLPESPPNFPGFNDNVSRSITNFIGYFALHTIRHHCYVNFGVDGELKFYQRNMYKKAFDDLRVNKAKPTVSVKPEASLKREPKAETPTLTRVKPEIRNDSDEDFCEIIEPVNFSAVKKSKTRQTSESNAKGGKELKDFPEKYMLEDLDKDDLPMNFKTKFRKLVEQNQMLRDEINDYKELIQLKIAEKKQRMG.

This is an uncharacterized protein from Caenorhabditis elegans.